A 184-amino-acid polypeptide reads, in one-letter code: Crossover junction endodeoxyribonuclease RuvC (184 aa).

Active-site residues include Asp-11, Glu-73, and Asp-147. The Mg(2+) site is built by Asp-11, Glu-73, and Asp-147.

This sequence belongs to the RuvC family. In terms of assembly, homodimer which binds Holliday junction (HJ) DNA. The HJ becomes 2-fold symmetrical on binding to RuvC with unstacked arms; it has a different conformation from HJ DNA in complex with RuvA. In the full resolvosome a probable DNA-RuvA(4)-RuvB(12)-RuvC(2) complex forms which resolves the HJ. The cofactor is Mg(2+).

Its subcellular location is the cytoplasm. The enzyme catalyses Endonucleolytic cleavage at a junction such as a reciprocal single-stranded crossover between two homologous DNA duplexes (Holliday junction).. Its function is as follows. The RuvA-RuvB-RuvC complex processes Holliday junction (HJ) DNA during genetic recombination and DNA repair. Endonuclease that resolves HJ intermediates. Cleaves cruciform DNA by making single-stranded nicks across the HJ at symmetrical positions within the homologous arms, yielding a 5'-phosphate and a 3'-hydroxyl group; requires a central core of homology in the junction. The consensus cleavage sequence is 5'-(A/T)TT(C/G)-3'. Cleavage occurs on the 3'-side of the TT dinucleotide at the point of strand exchange. HJ branch migration catalyzed by RuvA-RuvB allows RuvC to scan DNA until it finds its consensus sequence, where it cleaves and resolves the cruciform DNA. The sequence is that of Crossover junction endodeoxyribonuclease RuvC from Neisseria gonorrhoeae (strain ATCC 700825 / FA 1090).